Here is a 565-residue protein sequence, read N- to C-terminus: MPKRVLKGAAKRAREAKHARDAAKARRLSSFLNVRLNQEHIPHEILPNSASDDKLLDRPVTGADLFAPSSGPSSNSVYPSLLQEEYFWNYFWQTYHVSLCPILDDAQFKQHYQSLLIADGKGRKPSALVDIVVAACMQYHISTLPLGSQSGLVEGKDASVAGRWHYWRGQTLLTYELESLSISTLQCHVLCSIYLCGGSFHNMMDTAMAQAVRTAYILGLHRDLPSTLPEAKREMRRRLWWTVYFMDTRATMKLGRSFMLSESHSMPALCIDSLRVAASSGSTFVPADEDMTWLSFNLRQITLCRTFRAAYTSFHNTDFHLQEGQPIWDRPDALQAGAEIIAKHIPSLDAWCDSVPDALKLKRQDSNSRPFSTDGARVVLELSAPEWLQRQRMLLENTYHHVCVNLFRSMICFPYQPASQVHISENSLPGELATRCAAHAIALTKLTHQVLEETSLLDGWHEAFYCQWDAVMTLIGFVLAYPGSGTVTLEAKSAIHLAIAVSENFGFKFAVGTSASKIVQGLCAKSETLTANEYASAYIGASTQNANIYRIYGGQICGVIDWQNS.

Positions 204–273 are fungal transcription factor domain; it reads MDTAMAQAVR…HSMPALCIDS (70 aa).

It localises to the nucleus. In terms of biological role, transcription factor that regulates specifically the 4'-methoxyviridicatin/aspoquinolone biosynthesis cluster. The polypeptide is Transcription factor asqA (Emericella nidulans (strain FGSC A4 / ATCC 38163 / CBS 112.46 / NRRL 194 / M139) (Aspergillus nidulans)).